The sequence spans 101 residues: Trp operon repressor homolog (101 aa).

Residues 59–82 (QREIQQNLSTSAATITRGSNMLKM) mediate DNA binding.

It belongs to the TrpR family. In terms of assembly, homodimer.

Its subcellular location is the cytoplasm. Its function is as follows. This protein is an aporepressor. When complexed with L-tryptophan it binds the operator region of the trp operon and prevents the initiation of transcription. This is Trp operon repressor homolog from Actinobacillus succinogenes (strain ATCC 55618 / DSM 22257 / CCUG 43843 / 130Z).